The primary structure comprises 269 residues: MSAIPEPRIIENDDGSKTVISFKIQDGKKYKVTQKVKEITVTEKVNKNIALRRNWKKYGADKGAAPGPDISTTQLGEELELDLSPNWKEMEEEKAKEKAANSTQKVITCRICGGAHFTMHCPYKDTLGKKPTTSAGLDPAIGGGDMSAQGGSGSGRYVPPSLRAGARDPSSNAYQDQRERDDAKTIRLTQVNELADEEVLKRELLFPFGEIPRVFVVKNPETGRSRGVAYVTFQTEEIAAQALKLLEGRGFMNFMLHAEWSKPKPKKEE.

A disordered region spans residues 140–181 (AIGGGDMSAQGGSGSGRYVPPSLRAGARDPSSNAYQDQRERD). Positions 141–154 (IGGGDMSAQGGSGS) are enriched in gly residues. Serine 161 carries the post-translational modification Phosphoserine. Residues 184-263 (KTIRLTQVNE…FMLHAEWSKP (80 aa)) form the RRM domain.

This sequence belongs to the eIF-3 subunit G family. As to quaternary structure, component of the eukaryotic translation initiation factor 3 (eIF-3) complex.

The protein resides in the cytoplasm. In terms of biological role, RNA-binding component of the eukaryotic translation initiation factor 3 (eIF-3) complex, which is involved in protein synthesis of a specialized repertoire of mRNAs and, together with other initiation factors, stimulates binding of mRNA and methionyl-tRNAi to the 40S ribosome. The eIF-3 complex specifically targets and initiates translation of a subset of mRNAs involved in cell proliferation. This subunit can bind 18S rRNA. The protein is Eukaryotic translation initiation factor 3 subunit G of Kluyveromyces lactis (strain ATCC 8585 / CBS 2359 / DSM 70799 / NBRC 1267 / NRRL Y-1140 / WM37) (Yeast).